The following is a 1158-amino-acid chain: MIHQITRAGKSLLAAGCTLSILFASDSYAATALNVSQQPLFLTQGVAPNLLFTLDDSGSMAWAYVPDGISGNSGRAGRSSDYNALYYNPDYAYQVPKKLTLSGDQIIVSDYPVPRFTAAWQDGYAQGSTTNLSNNYRPQWGTGWLGCIDSSCNTGRAYYYTYKVSASCPAQPVSSSNSCYTYNALPTSQESNFAIWYSYYRNRILATKTAANLAFYSLPENVRLTWGALNTCSIGANSRSCQNNALLQFNKQHKINFFNWLANSPASGGTPLHAALDRAGRFLQTNGTAYTTEDGKTYSCRASYHIMMTDGIWNGRNVTPGNLDNQNQTFPDSTLYRPQPPYADSNASSLADLAFKYWTTDLRPSIDNDLKPFMAYKSGDDSKDYWDPRNNPATWQHMVNFTVGLGLSYSLTLNSAPTWTGSTFGNYEELMAGSKAWPSVDNDAAPGNVYDLWHAAINSRGDFFSAESPDSLVQAFNKILTRISERNTSSSKPAMTSALQDDGTGDKLIRYSYQSSFASDKNWAGDLIRYKVESTSTGSTKTQEWSAGALLDNRAPATRNIYIASNSGTNRLKPFTWSNIEGSQLATWLNRNPDKDNQADTKGAQRVDFIRGQQNMDGFRQRQAVLGDIVHSSPAVVGPAQYLTYLANPIEPSGDYGTFKTEADQRSPRVYVGSNDGMLHGFNIKTGVEEFAFIPTAVFEKLNKLTGISYQGGAHQYFVDATPVVSDAFFDGAWHTVLIGTLGAGGRGLFALDVTKPDDVKLLWEYDSSTDSDLGYTFSKPTVARLHSGQWAVVTGNGYGSDNDKAALLLIDLKKGTLIKKLEVQSERGIANGLSTPRLADNNSDGIADYAYAGDLQGNIWRFDLIGNTRNDDPDTNTSINPFKPGDVDPSAFRVSFSGAPLFRARADNNTRQPITAPPTLVRHPSRKGYIVIVGTGKYFEDDDAQADTSRAMTLYGIWDRQTKGESANSTPTIDRNALTAQTMTTEANSTFGSVNRNIRLISQNPVKWYKDGATGTANSDVASYGWRLNLEVNSSKKGEMMIEDMFAAGQVLLLQTLTPNDDPCDSGSTSWTYGLNPYTGGRTSFTVFDLKRAGIVDSGSDYNGSVVSAFQQDGLGGLAITQNEQRQSEACTGDECIIFNPSDKSNGRQTWRVVEEK.

An N-terminal signal peptide occupies residues 1–29 (MIHQITRAGKSLLAAGCTLSILFASDSYA). Residues Asp841, Asn843, Asp845, Ile847, and Asp849 each coordinate Ca(2+).

Belongs to the PilY1 family.

Its subcellular location is the fimbrium. The protein resides in the membrane. It is found in the cytoplasm. It localises to the cytosol. Functionally, involved in pilus assembly, twitching motility and adhesion to host cells. Primes type IV pili (T4P) assembly and is required for inclusion of minor pilins PilV, PilW and PilX to the surface pili. Stabilizes assembled pilus fibers likely by antagonizing retraction mediated by PilT. Calcium-binding and calcium release by PilY1 seem to be essential for twitching motility and for regulation of pilus retraction dynamics of PilT. Regulates surface-activated virulence possibly by acting as a surface-attachment mechanosensor. This chain is Type IV pilus biogenesis factor PilY1, found in Pseudomonas aeruginosa (strain UCBPP-PA14).